Here is a 55-residue protein sequence, read N- to C-terminus: Large ribosomal subunit protein bL33 (55 aa).

Belongs to the bacterial ribosomal protein bL33 family.

The polypeptide is Large ribosomal subunit protein bL33 (Sinorhizobium medicae (strain WSM419) (Ensifer medicae)).